The sequence spans 128 residues: Saitohin (128 aa).

A disordered region spans residues 77-128; that stretch reads SYSSEESSRNGAEQGRQLSIEGPFQGQNCPSHPAAALPLPMRGESQATSCQV.

Interacts with PRDX6. Highest expression in placenta, muscle, fetal brain, and adult brain, with lower expression in heart, kidney, stomach, testis, and adrenal gland. In the central nervous system, highest expression is in temporal lobe, hypothalamus, medulla and spinal cord, with lower expression in other brain regions.

Its subcellular location is the cytoplasm. It is found in the nucleus. This is Saitohin (STH) from Homo sapiens (Human).